The following is a 274-amino-acid chain: Thiamine kinase (274 aa).

The protein belongs to the thiamine kinase family.

The enzyme catalyses thiamine + ATP = thiamine phosphate + ADP + H(+). It participates in cofactor biosynthesis; thiamine diphosphate biosynthesis; thiamine phosphate from thiamine: step 1/1. Catalyzes the ATP-dependent phosphorylation of thiamine to thiamine phosphate. Is involved in thiamine salvage. In Escherichia coli (strain K12 / MC4100 / BW2952), this protein is Thiamine kinase.